The primary structure comprises 236 residues: MAFTFKQFHIDDLNCGMPVSTDGVILGAWAPLAEAKNILDIGAGSGLLSLMAAQRSQGQITAVELEEKAAAACRYNMTQSPWAKRCQLVHGDIQSVCQLAQYQGYFDHIICNPPYFEHGPKASEQHRAMARHTETLGFTPLLDAISQCLSFEGYASLILPIQSLARFKACLNDTALYLVREVWVKSVENKAANRALLLLSKTEVEPYQRTDLTIRGEDGNYTEQMIELTKDFYLKL.

Belongs to the methyltransferase superfamily. tRNA (adenine-N(6)-)-methyltransferase family.

It localises to the cytoplasm. It catalyses the reaction adenosine(37) in tRNA1(Val) + S-adenosyl-L-methionine = N(6)-methyladenosine(37) in tRNA1(Val) + S-adenosyl-L-homocysteine + H(+). Its function is as follows. Specifically methylates the adenine in position 37 of tRNA(1)(Val) (anticodon cmo5UAC). This is tRNA1(Val) (adenine(37)-N6)-methyltransferase from Shewanella sp. (strain MR-4).